The primary structure comprises 251 residues: Probable transcriptional regulatory protein BLA_1344 (251 aa).

It belongs to the TACO1 family.

It is found in the cytoplasm. This Bifidobacterium animalis subsp. lactis (strain AD011) protein is Probable transcriptional regulatory protein BLA_1344.